A 329-amino-acid chain; its full sequence is tRNA dimethylallyltransferase (329 aa).

Position 24–31 (24–31 (GSTGIGKT)) interacts with ATP. 26–31 (TGIGKT) contributes to the substrate binding site. An interaction with substrate tRNA region spans residues 49 to 52 (DSMQ).

It belongs to the IPP transferase family. Monomer. Requires Mg(2+) as cofactor.

The catalysed reaction is adenosine(37) in tRNA + dimethylallyl diphosphate = N(6)-dimethylallyladenosine(37) in tRNA + diphosphate. Functionally, catalyzes the transfer of a dimethylallyl group onto the adenine at position 37 in tRNAs that read codons beginning with uridine, leading to the formation of N6-(dimethylallyl)adenosine (i(6)A). The protein is tRNA dimethylallyltransferase of Methylacidiphilum infernorum (isolate V4) (Methylokorus infernorum (strain V4)).